A 76-amino-acid chain; its full sequence is KANTR integral membrane protein (76 aa).

Positions 1–25 (MSPFSLLILVICAFSLFFLINLTRG) are cleaved as a signal peptide. The Extracellular portion of the chain corresponds to 26–34 (LSILLVFSK). A helical membrane pass occupies residues 35 to 55 (NQLLALLLLSIVSLFSISLIS). Residues 56-76 (ALIFFDLLPSTFFGFILLFFF) are Cytoplasmic-facing.

It is found in the membrane. The polypeptide is KANTR integral membrane protein (Homo sapiens (Human)).